The primary structure comprises 648 residues: Pumilio homolog 3 (648 aa).

The interval 1–124 is disordered; the sequence is MEVKGKKQFT…KKKKELKQSR (124 aa). A compositionally biased stretch (basic and acidic residues) spans 17–27; the sequence is AQEKNRFHKNS. Position 33 is an N6-acetyllysine (Lys-33). Positions 60-69 are enriched in basic residues; the sequence is LGKKGVKQFK. The span at 94-124 shows a compositional bias: basic and acidic residues; the sequence is FQPDGRSDESAAKKPKWDDFKKKKKELKQSR. The short motif at 106–118 is the Nuclear localization signal element; sequence KKPKWDDFKKKKK. The PUM-HD domain occupies 143–510; it reads EILRRKDCDK…VVLDKSACVL (368 aa). Pumilio repeat units lie at residues 177–212, 213–248, 249–277, 289–325, 326–361, 362–397, 398–435, 436–504, 505–551, 552–596, and 597–636; these read HDST…LSKA, KYSR…MLRH, AEAS…ELYG, RTLD…VIKH, SLVH…LAHT, HDGA…VANG, QYSH…IVND, KYGR…VVLD, KSAC…IAEH, PAGH…WASV, and NRGA…KSTS. The segment at 289 to 297 is HA-8; sequence RTLDKVLEV.

Interacts with PARP1 (via catalytic domain). Widely expressed.

Its subcellular location is the nucleus. The protein resides in the nucleolus. It is found in the nucleoplasm. The protein localises to the chromosome. Inhibits the poly(ADP-ribosyl)ation activity of PARP1 and the degradation of PARP1 by CASP3 following genotoxic stress. Binds to double-stranded RNA or DNA without sequence specificity. Involved in development of the eye and of primordial germ cells. The protein is Pumilio homolog 3 of Homo sapiens (Human).